Here is a 529-residue protein sequence, read N- to C-terminus: Lysine--tRNA ligase (529 aa).

A 'HIGH' region motif is present at residues 29-37 (ISGSVHIGN). The short motif at 274–278 (AMSKS) is the 'KMSKS' region element. K277 contributes to the ATP binding site.

Belongs to the class-I aminoacyl-tRNA synthetase family.

The protein localises to the cytoplasm. The enzyme catalyses tRNA(Lys) + L-lysine + ATP = L-lysyl-tRNA(Lys) + AMP + diphosphate. The chain is Lysine--tRNA ligase from Methanosphaera stadtmanae (strain ATCC 43021 / DSM 3091 / JCM 11832 / MCB-3).